The chain runs to 234 residues: Multicopy suppressor of SEC21 protein 28 (234 aa).

Over 1–47 (MQTPPESTDVKLDTLNEPSAHLIEKNVALPKDIFRSYLSYWIYEIAR) the chain is Cytoplasmic. T3 is modified (phosphothreonine). A helical transmembrane segment spans residues 48 to 68 (YTPVMILSLVIGVLVLLIIFF). Topologically, residues 69–72 (NDNE) are extracellular. Residues 73–93 (ACVFNSAIFAFTSLVGLLIIL) traverse the membrane as a helical segment. Over 94 to 234 (SDGNPKLVSR…NIDALLKKTE (141 aa)) the chain is Cytoplasmic. The COPI binding stretch occupies residues 231–234 (KKTE).

It belongs to the DUP/COS family. Interacts with MST27. Binds to coatomer proteins of COPI and SEC23/SEC24 of COPII coated vesicles.

It localises to the endoplasmic reticulum. The protein localises to the golgi apparatus. It is found in the cytoplasmic vesicle. The protein resides in the COPI-coated vesicle membrane. Its subcellular location is the COPII-coated vesicle membrane. Involved in protein trafficking vesicle formation, probably by stabilizing of coatomer at the Golgi membrane and thus allowing the efficient formation of COPI coated vesicles. This chain is Multicopy suppressor of SEC21 protein 28 (MST28), found in Saccharomyces cerevisiae (strain ATCC 204508 / S288c) (Baker's yeast).